The primary structure comprises 179 residues: Adenine phosphoribosyltransferase (179 aa).

It belongs to the purine/pyrimidine phosphoribosyltransferase family. In terms of assembly, homodimer.

It localises to the cytoplasm. The enzyme catalyses AMP + diphosphate = 5-phospho-alpha-D-ribose 1-diphosphate + adenine. It participates in purine metabolism; AMP biosynthesis via salvage pathway; AMP from adenine: step 1/1. In terms of biological role, catalyzes a salvage reaction resulting in the formation of AMP, that is energically less costly than de novo synthesis. The protein is Adenine phosphoribosyltransferase of Bradyrhizobium diazoefficiens (strain JCM 10833 / BCRC 13528 / IAM 13628 / NBRC 14792 / USDA 110).